The primary structure comprises 1118 residues: Cytospin-A (1118 aa).

Disordered regions lie at residues 1 to 63 (MKKA…AGMA), 75 to 176 (KKST…NQIS), 294 to 324 (SLSP…GSVE), and 359 to 391 (SSDD…NASE). Positions 80-90 (SSAAPSAPAPA) are enriched in low complexity. A compositionally biased stretch (polar residues) spans 93–117 (ISENKSKISTGTSSSAKRSTSAGNK). Positions 120 to 131 (SSTRERLRERTR) are enriched in basic and acidic residues. The segment covering 133–145 (NQSKKLPSVSQGA) has biased composition (polar residues). Over residues 158 to 171 (TAAEGDIRMSKSKS) the composition is skewed to basic and acidic residues. The stretch at 168–281 (KSKSDNQISD…LNALGFSLEQ (114 aa)) forms a coiled coil. Positions 294 to 304 (SLSPEITPGNQ) are enriched in polar residues. Over residues 359–373 (SSDDALDAPSSSESE) the composition is skewed to low complexity. Residues Ser-385, Ser-386, and Ser-390 each carry the phosphoserine modification. Coiled-coil stretches lie at residues 395 to 450 (ACLT…MESL) and 488 to 808 (RYME…RGRV). A phosphoserine mark is found at Ser-869, Ser-882, and Ser-888. Positions 921–999 (TSSTSRPASL…STRSRIREER (79 aa)) are disordered. Residues 947-957 (RSSEEMKRDIS) are compositionally biased toward basic and acidic residues. Over residues 972–992 (TTSPQLSLSSSPTASVTPSTR) the composition is skewed to low complexity. The 106-residue stretch at 1012–1117 (GSKRNALLKW…YVTAIYKYFE (106 aa)) folds into the Calponin-homology (CH) domain.

Belongs to the cytospin-A family. May interact with both microtubules and actin cytoskeleton.

Its subcellular location is the cytoplasm. It is found in the cytoskeleton. The protein localises to the spindle. It localises to the cell junction. The protein resides in the gap junction. Involved in cytokinesis and spindle organization. May play a role in actin cytoskeleton organization and microtubule stabilization and hence required for proper cell adhesion and migration. The polypeptide is Cytospin-A (Specc1l) (Mus musculus (Mouse)).